Reading from the N-terminus, the 473-residue chain is Maltose fermentation regulatory protein MAL13 (473 aa).

Residues 13–39 (CDCCRIRRVKCDGKRPCSSCLQNSLDC) constitute a DNA-binding region (zn(2)-C6 fungal-type). The Nuclear localization signal motif lies at 46 to 54 (RKRGPKSIR).

This sequence belongs to the MAL13 family.

It is found in the nucleus. In terms of biological role, regulates the coordinate transcription of structural MAL1S (maltase) and AGT1 (maltose permease) genes. This Saccharomyces cerevisiae (strain ATCC 204508 / S288c) (Baker's yeast) protein is Maltose fermentation regulatory protein MAL13 (MAL13).